Consider the following 280-residue polypeptide: MKKVVCIVGPTGSGKTALSVKLAKSLGAEIINGDSVSIYKKLDIGSAKITTDEMDGVKHHLISHVALDEPYTVYNFQQDVRTLIDQIDKPFIVGGSGLYVKSALYNYEFEQQDNVEFPNINEMIEVIRKADPDIEIDLNNPRRIESAYRTIISGQKRSNKTKKNEPLYDIYLIYLDMDRKILKKRLETRLDLMIEKGFIEETKALINYDLNIIGYREIKDYLNGMNDLDTAKEKIITATMRFAKRQKTWFINQMKPKVYNALSPDLLDECLKDIKEFIGV.

Residue 9 to 16 participates in ATP binding; sequence GPTGSGKT. Residue 11-16 coordinates substrate; sequence TGSGKT. Positions 34 to 37 are interaction with substrate tRNA; that stretch reads DSVS.

It belongs to the IPP transferase family. As to quaternary structure, monomer. Requires Mg(2+) as cofactor.

It catalyses the reaction adenosine(37) in tRNA + dimethylallyl diphosphate = N(6)-dimethylallyladenosine(37) in tRNA + diphosphate. Its function is as follows. Catalyzes the transfer of a dimethylallyl group onto the adenine at position 37 in tRNAs that read codons beginning with uridine, leading to the formation of N6-(dimethylallyl)adenosine (i(6)A). This is tRNA dimethylallyltransferase from Acholeplasma laidlawii (strain PG-8A).